The chain runs to 411 residues: Glutamate dehydrogenase A (411 aa).

Lys102 is a catalytic residue.

This sequence belongs to the Glu/Leu/Phe/Val dehydrogenases family.

It carries out the reaction L-glutamate + NAD(+) + H2O = 2-oxoglutarate + NH4(+) + NADH + H(+). The enzyme catalyses L-glutamate + NADP(+) + H2O = 2-oxoglutarate + NH4(+) + NADPH + H(+). This is Glutamate dehydrogenase A (GDHA) from Nicotiana plumbaginifolia (Leadwort-leaved tobacco).